The chain runs to 348 residues: GMP reductase (348 aa).

An NADP(+)-binding site is contributed by 108–131 (ADFIKLRQILALSPSLKFICIDVA). Residues glycine 181 and glycine 183 each contribute to the K(+) site. Cysteine 186 functions as the Thioimidate intermediate in the catalytic mechanism. Position 216-239 (216-239 (IVSDGGCTMPGDVAKAFGGGADFV)) interacts with NADP(+).

Belongs to the IMPDH/GMPR family. GuaC type 1 subfamily. In terms of assembly, homotetramer.

The enzyme catalyses IMP + NH4(+) + NADP(+) = GMP + NADPH + 2 H(+). In terms of biological role, catalyzes the irreversible NADPH-dependent deamination of GMP to IMP. It functions in the conversion of nucleobase, nucleoside and nucleotide derivatives of G to A nucleotides, and in maintaining the intracellular balance of A and G nucleotides. This chain is GMP reductase, found in Edwardsiella ictaluri (strain 93-146).